Here is a 407-residue protein sequence, read N- to C-terminus: RING finger protein 44 (407 aa).

Residues 26 to 58 (LSSSPGQLWGRPSNLSVEEHRASAPAGRSPRML) are disordered. The segment at 355-396 (CVVCFSDFEVRQLLRVLPCNHEFHAKCVDKWLKANRTCPICR) adopts an RING-type; atypical zinc-finger fold.

The sequence is that of RING finger protein 44 (Rnf44) from Mus musculus (Mouse).